A 201-amino-acid chain; its full sequence is L(+)-tartrate dehydratase subunit beta (201 aa).

The active site involves His37.

Belongs to the class-I fumarase family. As to quaternary structure, heterotetramer of two alpha and two beta subunits.

The catalysed reaction is (2R,3R)-tartrate = oxaloacetate + H2O. This chain is L(+)-tartrate dehydratase subunit beta (ttdB), found in Escherichia coli O6:K15:H31 (strain 536 / UPEC).